Reading from the N-terminus, the 202-residue chain is Orotate phosphoribosyltransferase (202 aa).

5-phospho-alpha-D-ribose 1-diphosphate contacts are provided by residues R94, K98, H100, and 120–128 (EDLISTGGS). An orotate-binding site is contributed by S124.

It belongs to the purine/pyrimidine phosphoribosyltransferase family. PyrE subfamily. As to quaternary structure, homodimer. Requires Mg(2+) as cofactor.

The catalysed reaction is orotidine 5'-phosphate + diphosphate = orotate + 5-phospho-alpha-D-ribose 1-diphosphate. Its pathway is pyrimidine metabolism; UMP biosynthesis via de novo pathway; UMP from orotate: step 1/2. Its function is as follows. Catalyzes the transfer of a ribosyl phosphate group from 5-phosphoribose 1-diphosphate to orotate, leading to the formation of orotidine monophosphate (OMP). The polypeptide is Orotate phosphoribosyltransferase (Staphylococcus haemolyticus (strain JCSC1435)).